Reading from the N-terminus, the 222-residue chain is Cytidylate kinase (222 aa).

An ATP-binding site is contributed by 7-15 (GPAGAGKST).

Belongs to the cytidylate kinase family. Type 1 subfamily.

Its subcellular location is the cytoplasm. It carries out the reaction CMP + ATP = CDP + ADP. It catalyses the reaction dCMP + ATP = dCDP + ADP. This chain is Cytidylate kinase, found in Carboxydothermus hydrogenoformans (strain ATCC BAA-161 / DSM 6008 / Z-2901).